Reading from the N-terminus, the 468-residue chain is Argininosuccinate lyase (468 aa).

This sequence belongs to the lyase 1 family. Argininosuccinate lyase subfamily.

It is found in the cytoplasm. It carries out the reaction 2-(N(omega)-L-arginino)succinate = fumarate + L-arginine. It functions in the pathway amino-acid biosynthesis; L-arginine biosynthesis; L-arginine from L-ornithine and carbamoyl phosphate: step 3/3. This is Argininosuccinate lyase from Zymomonas mobilis subsp. mobilis (strain ATCC 31821 / ZM4 / CP4).